We begin with the raw amino-acid sequence, 1685 residues long: Phosphatidylinositol 4-phosphate 3-kinase C2 domain-containing subunit alpha (1685 aa).

Disordered stretches follow at residues 1 to 33 (MAQI…EALQ) and 41 to 60 (KLQK…LSSS). N-acetylalanine is present on A2. The tract at residues 2–142 (AQISSNSGFK…FRPTIQRGQW (141 aa)) is interaction with clathrin; sufficient to induce clathrin assembly. Positions 19 to 31 (EPTRAKDVDKEEA) are enriched in basic and acidic residues. The segment covering 49 to 60 (TDNQRGFELSSS) has biased composition (polar residues). 5 positions are modified to phosphoserine: S60, S108, S259, S327, and S338. A PI3K-RBD domain is found at 419–507 (NASVKVSIDI…DTEIRLQLLT (89 aa)). The residue at position 628 (S628) is a Phosphoserine. Residues 680–839 (TTEQLQFTIF…ERIVLQVDFP (160 aa)) enclose the C2 PI3K-type domain. The PIK helical domain maps to 859-1035 (QHNLETLEND…EHVLGALLSV (177 aa)). Residues 1103-1381 (SIKSCSFFSS…LIESSLGSIA (279 aa)) enclose the PI3K/PI4K catalytic domain. Residues 1109-1115 (FFSSNAV) form a G-loop region. The tract at residues 1245 to 1253 (GICDRHNDN) is catalytic loop. The segment at 1264 to 1290 (HIDFGKFLGHAQMFGTFKRDRAPFVLT) is activation loop. Residues 1420 to 1536 (GRIKEVSVFT…TFFHPLLRDE (117 aa)) enclose the PX domain. Positions 1486–1491 (RMVLGR) are interaction with PtdIns(4,5)P2-containing membranes. At S1551 the chain carries Phosphoserine. The C2 domain maps to 1554-1677 (TPGQIGGAVK…NLSKETVKWY (124 aa)). The Nuclear localization signal motif lies at 1607 to 1618 (SKRKTKISRKTR).

The protein belongs to the PI3/PI4-kinase family. Part of a complex with ERBB2 and EGFR. Interacts with clathrin trimers. Interacts with SBF2/MTMR13. Requires Ca(2+) as cofactor. Mg(2+) serves as cofactor. Post-translationally, phosphorylated on Ser-259 during mitosis and upon UV irradiation; which does not change enzymatic activity but leads to proteasomal degradation. Phosphorylated upon insulin stimulation; which may lead to enzyme activation.

It localises to the cell membrane. Its subcellular location is the cytoplasmic vesicle. The protein resides in the clathrin-coated vesicle. The protein localises to the nucleus. It is found in the cytoplasm. It localises to the golgi apparatus. Its subcellular location is the trans-Golgi network. It carries out the reaction a 1,2-diacyl-sn-glycero-3-phospho-(1D-myo-inositol 4-phosphate) + ATP = a 1,2-diacyl-sn-glycero-3-phospho-(1D-myo-inositol-3,4-bisphosphate) + ADP + H(+). The enzyme catalyses a 1,2-diacyl-sn-glycero-3-phospho-(1D-myo-inositol) + ATP = a 1,2-diacyl-sn-glycero-3-phospho-(1D-myo-inositol-3-phosphate) + ADP + H(+). The catalysed reaction is a 1,2-diacyl-sn-glycero-3-phospho-(1D-myo-inositol-4,5-bisphosphate) + ATP = a 1,2-diacyl-sn-glycero-3-phospho-(1D-myo-inositol-3,4,5-trisphosphate) + ADP + H(+). Its activity is regulated as follows. Only slightly inhibited by wortmannin and LY294002. Activated by clathrin and insulin. In terms of biological role, generates phosphatidylinositol 3-phosphate (PtdIns3P) and phosphatidylinositol 3,4-bisphosphate (PtdIns(3,4)P2) that act as second messengers. Has a role in several intracellular trafficking events. Functions in insulin signaling and secretion. Required for translocation of the glucose transporter SLC2A4/GLUT4 to the plasma membrane and glucose uptake in response to insulin-mediated RHOQ activation. Regulates insulin secretion through two different mechanisms: involved in glucose-induced insulin secretion downstream of insulin receptor in a pathway that involves AKT1 activation and TBC1D4/AS160 phosphorylation, and participates in the late step of insulin granule exocytosis probably in insulin granule fusion. Synthesizes PtdIns3P in response to insulin signaling. Functions in clathrin-coated endocytic vesicle formation and distribution. Regulates dynamin-independent endocytosis, probably by recruiting EEA1 to internalizing vesicles. In neurosecretory cells synthesizes PtdIns3P on large dense core vesicles. Participates in calcium induced contraction of vascular smooth muscle by regulating myosin light chain (MLC) phosphorylation through a mechanism involving Rho kinase-dependent phosphorylation of the MLCP-regulatory subunit MYPT1. May play a role in the EGF signaling cascade. May be involved in mitosis and UV-induced damage response. Required for maintenance of normal renal structure and function by supporting normal podocyte function. Involved in the regulation of ciliogenesis and trafficking of ciliary components. This Pongo abelii (Sumatran orangutan) protein is Phosphatidylinositol 4-phosphate 3-kinase C2 domain-containing subunit alpha (PIK3C2A).